Reading from the N-terminus, the 572-residue chain is Putative lysozyme-like protein (572 aa).

The signal sequence occupies residues 1-17; it reads MRLLLVLLALIFSVVSA. A compositionally biased stretch (low complexity) spans 145 to 165; that stretch reads MSSSGSSSSSGSSGSSSSSSG. 4 disordered regions span residues 145-199, 231-297, 326-388, and 433-469; these read MSSS…HGGG, SSSS…GGGV, ANSV…GERK, and AGSSSSSGSSGSSSSSSSSGSSGGSSGGSSGGGGGSG. Gly residues predominate over residues 166 to 185; that stretch reads SSGGGSSGGGSGGGGGGSGL. Residues 231 to 240 show a composition bias toward low complexity; it reads SSSSADAGSS. The segment covering 258 to 282 has biased composition (gly residues); that stretch reads STGGTGGSSGSSGGGSGGGGGGSGL. Over residues 326 to 358 the composition is skewed to low complexity; sequence ANSVSSLAGSMSSSGSSSSSGSSGSSSSSSSSG. The segment covering 359–382 has biased composition (gly residues); it reads SSGGSSGGGSSGGGSGGGGGGSGL. The segment covering 433 to 452 has biased composition (low complexity); that stretch reads AGSSSSSGSSGSSSSSSSSG. A compositionally biased stretch (gly residues) spans 453-469; sequence SSGGSSGGSSGGGGGSG.

The protein belongs to the dictyostelium lysozyme family.

The chain is Putative lysozyme-like protein (alyL) from Dictyostelium discoideum (Social amoeba).